We begin with the raw amino-acid sequence, 375 residues long: Actin, cytoplasmic (375 aa).

This sequence belongs to the actin family.

It localises to the cytoplasm. The protein localises to the cytoskeleton. The catalysed reaction is ATP + H2O = ADP + phosphate + H(+). Actins are highly conserved proteins that are involved in various types of cell motility and are ubiquitously expressed in all eukaryotic cells. This chain is Actin, cytoplasmic, found in Sterkiella nova (Ciliate).